The sequence spans 382 residues: Chaperone protein DnaJ (382 aa).

Residues 5-70 form the J domain; it reads DYYEVLGVSR…DKKAAYDRYG (66 aa). The CR-type zinc-finger motif lies at 141 to 219; the sequence is GVQKTINVPA…CHGAGRVEKE (79 aa). Zn(2+) contacts are provided by C154, C157, C171, C174, C193, C196, C207, and C210. CXXCXGXG motif repeat units follow at residues 154–161, 171–178, 193–200, and 207–214; these read CDACKGTG, CPTCSGMG, CPTCNGMG, and CKVCHGAG.

Belongs to the DnaJ family. In terms of assembly, homodimer. The cofactor is Zn(2+).

It localises to the cytoplasm. Functionally, participates actively in the response to hyperosmotic and heat shock by preventing the aggregation of stress-denatured proteins and by disaggregating proteins, also in an autonomous, DnaK-independent fashion. Unfolded proteins bind initially to DnaJ; upon interaction with the DnaJ-bound protein, DnaK hydrolyzes its bound ATP, resulting in the formation of a stable complex. GrpE releases ADP from DnaK; ATP binding to DnaK triggers the release of the substrate protein, thus completing the reaction cycle. Several rounds of ATP-dependent interactions between DnaJ, DnaK and GrpE are required for fully efficient folding. Also involved, together with DnaK and GrpE, in the DNA replication of plasmids through activation of initiation proteins. The sequence is that of Chaperone protein DnaJ from Cereibacter sphaeroides (strain ATCC 17023 / DSM 158 / JCM 6121 / CCUG 31486 / LMG 2827 / NBRC 12203 / NCIMB 8253 / ATH 2.4.1.) (Rhodobacter sphaeroides).